The chain runs to 179 residues: Large ribosomal subunit protein uL5 (179 aa).

Belongs to the universal ribosomal protein uL5 family. Part of the 50S ribosomal subunit; part of the 5S rRNA/L5/L18/L25 subcomplex. Contacts the 5S rRNA and the P site tRNA. Forms a bridge to the 30S subunit in the 70S ribosome.

Functionally, this is one of the proteins that bind and probably mediate the attachment of the 5S RNA into the large ribosomal subunit, where it forms part of the central protuberance. In the 70S ribosome it contacts protein S13 of the 30S subunit (bridge B1b), connecting the 2 subunits; this bridge is implicated in subunit movement. Contacts the P site tRNA; the 5S rRNA and some of its associated proteins might help stabilize positioning of ribosome-bound tRNAs. This chain is Large ribosomal subunit protein uL5, found in Haemophilus ducreyi (strain 35000HP / ATCC 700724).